Reading from the N-terminus, the 529-residue chain is Membrane-bound lytic murein transglycosylase F (529 aa).

Positions 1–27 are cleaved as a signal peptide; sequence MPIFNLHQLRNFLFIIATTLFLSACQI. Residues 28 to 287 are non-LT domain; that stretch reads ESKPTSELDQ…RLEEKYIGHI (260 aa). An LT domain region spans residues 288–529; sequence GSFDYVDTRA…QATLTTEVQP (242 aa). E332 is an active-site residue. The tract at residues 510-529 is disordered; the sequence is EALSPDVGVSQATLTTEVQP. Residues 519–529 show a composition bias toward polar residues; it reads SQATLTTEVQP.

It in the N-terminal section; belongs to the bacterial solute-binding protein 3 family. The protein in the C-terminal section; belongs to the transglycosylase Slt family.

The protein localises to the cell outer membrane. The catalysed reaction is Exolytic cleavage of the (1-&gt;4)-beta-glycosidic linkage between N-acetylmuramic acid (MurNAc) and N-acetylglucosamine (GlcNAc) residues in peptidoglycan, from either the reducing or the non-reducing ends of the peptidoglycan chains, with concomitant formation of a 1,6-anhydrobond in the MurNAc residue.. Its function is as follows. Murein-degrading enzyme that degrades murein glycan strands and insoluble, high-molecular weight murein sacculi, with the concomitant formation of a 1,6-anhydromuramoyl product. Lytic transglycosylases (LTs) play an integral role in the metabolism of the peptidoglycan (PG) sacculus. Their lytic action creates space within the PG sacculus to allow for its expansion as well as for the insertion of various structures such as secretion systems and flagella. The polypeptide is Membrane-bound lytic murein transglycosylase F (Vibrio vulnificus (strain CMCP6)).